We begin with the raw amino-acid sequence, 350 residues long: Tsukushi (350 aa).

The signal sequence occupies residues 1-17 (MAPSWLFLLFIPGMVGS). Residues 18–59 (SRSCFPGCQCIVDNFGLFHSFSLTKVDCSGVGPHVVPVSIPL) form the LRRNT domain. 10 LRR repeats span residues 60 to 81 (DTSY…VLSG), 86 to 107 (TLIN…TFSK), 110 to 131 (YLES…SFLY), 133 to 154 (RLTE…AFTL), 159 to 180 (RSMT…AERP), 183 to 203 (NIHS…LHGI), 204 to 225 (PLRH…SFLG), 228 to 250 (GLTH…SFKT), 253 to 275 (SLLD…MFFG), and 278 to 299 (SLQE…IMLN). N-linked (GlcNAc...) asparagine glycans are attached at residues asparagine 75 and asparagine 91.

Interacts with bmp4. Interacts with dll1 (via extracellular region). Interacts with fgf8; inhibits fgf8 signaling. Interacts with nodal2/Xnr2; enhances nodal2 activity.

It is found in the secreted. Contributes to various developmental events through its interactions with multiple signaling pathways. Dorsalizing factor which functions as an inhibitor of bone morphogenetic proteins (BMP) during gastrulation. Promotes dll1-dependent activation of Notch signaling and is required for neural crest formation. Induces endoderm and dorsal mesoderm formation by enhancing nodal2/Xnr2 activity while inhibiting ventrolateral mesoderm formation through inhibition of fgf8. This is Tsukushi (tsku) from Xenopus tropicalis (Western clawed frog).